Here is a 342-residue protein sequence, read N- to C-terminus: Cell division protein ZipA (342 aa).

Residues 1–6 (MEDLQL) lie on the Periplasmic side of the membrane. A helical membrane pass occupies residues 7 to 27 (VLFILGAIAIVAVLVHGFWSI). The Cytoplasmic portion of the chain corresponds to 28–342 (RRQQPKSLKD…DYLHRIRANA (315 aa)). The disordered stretch occupies residues 33 to 57 (KSLKDSPMGNFYKQQADKESPPKRV). The span at 47–57 (QADKESPPKRV) shows a compositional bias: basic and acidic residues.

It belongs to the ZipA family. As to quaternary structure, interacts with FtsZ via their C-terminal domains.

It is found in the cell inner membrane. Essential cell division protein that stabilizes the FtsZ protofilaments by cross-linking them and that serves as a cytoplasmic membrane anchor for the Z ring. Also required for the recruitment to the septal ring of downstream cell division proteins. This is Cell division protein ZipA from Shewanella putrefaciens (strain CN-32 / ATCC BAA-453).